A 238-amino-acid polypeptide reads, in one-letter code: MGRKWANIVAKKTAKDGANSKIYAKFGVEIYVAAKQGEPDPESNSALKFVLERAKQAQVPKHVIDKAIDKAKGNTDETFVEGRYEGFGPNGSMIIVDTLTSNVNRTAANVRTAFGKNGGNMGASGSVSYMFDKKGVIVFAGEDADAIFEQLLEADVDVEDVEAEDGTITVYTEPTDLHKALEALRANGQEEFQVTELEMIPQTEVTLEGEDLETFKGLIDALEADDDVQKVYHNVADM.

Belongs to the TACO1 family. YeeN subfamily.

The protein resides in the cytoplasm. This chain is Probable transcriptional regulatory protein STER_0242, found in Streptococcus thermophilus (strain ATCC BAA-491 / LMD-9).